The chain runs to 288 residues: MVGVGGGDVEDVTPRPGGCQISGRGARGCNGIPGAAAWEAALPRRRPRRHPSVNPRSRAAGSPRTRGRRTKERPSGSRLGDHGRGRALPGGRVGGRGRGRAPERVGGRGRGRGTAAPRAAPAARGSRPGPAGTMAAGSITTLPALPEDGGSGAFPPGHFKDPKRLYCKNGGFFLRIHPDGRVDGVREKSDPHIKLQLQAEERGVVSIKGVCANRYLAMKEDGRLLASKCVTDECFFFERLESNNYNTYRSRKYTSWYVALKRTGQYKLGSKTGPGQKAILFLPMSAKS.

Residues 1 to 142 (MVGVGGGDVE…TMAAGSITTL (142 aa)) constitute a propeptide that is removed on maturation. Residues 1 to 156 (MVGVGGGDVE…EDGGSGAFPP (156 aa)) form a disordered region. Residues 72-84 (ERPSGSRLGDHGR) are compositionally biased toward basic and acidic residues. Omega-N-methylarginine; alternate is present on residues Arg-108, Arg-110, and Arg-112. A symmetric dimethylarginine; alternate mark is found at Arg-108, Arg-110, and Arg-112. The span at 113 to 132 (GTAAPRAAPAARGSRPGPAG) shows a compositional bias: low complexity. Asn-169 is a binding site for heparin. Positions 179–181 (DGR) match the Cell attachment site; atypical motif. Tyr-215 carries the phosphotyrosine; by TEC modification. Residues 221 to 223 (DGR) carry the Cell attachment site; atypical motif. A Glycyl lysine isopeptide (Lys-Gly) (interchain with G-Cter in SUMO1) cross-link involves residue Lys-228. The tract at residues 261–277 (KRTGQYKLGSKTGPGQK) is heparin-binding.

This sequence belongs to the heparin-binding growth factors family. As to quaternary structure, monomer. Homodimer. Interacts with FGFR1, FGFR2, FGFR3 and FGFR4. Affinity between fibroblast growth factors (FGFs) and their receptors is increased by heparan sulfate glycosaminoglycans that function as coreceptors. Interacts with CSPG4, FGFBP1 and TEC. Found in a complex with FGFBP1, FGF1 and FGF2. Interacts with FGFBP3. Interacts with integrin ITGAV:ITGB3; the interaction is required for FGF2 signaling. Interacts with SNORC (via the extracellular domain). Interacts with glypican GPC3. Post-translationally, phosphorylation at Tyr-215 regulates FGF2 unconventional secretion.

The protein localises to the secreted. Its subcellular location is the nucleus. Its function is as follows. Acts as a ligand for FGFR1, FGFR2, FGFR3 and FGFR4. Also acts as an integrin ligand which is required for FGF2 signaling. Binds to integrin ITGAV:ITGB3. Plays an important role in the regulation of cell survival, cell division, cell differentiation and cell migration. Functions as a potent mitogen in vitro. Can induce angiogenesis. Mediates phosphorylation of ERK1/2 and thereby promotes retinal lens fiber differentiation. The sequence is that of Fibroblast growth factor 2 from Pan troglodytes (Chimpanzee).